The primary structure comprises 323 residues: Olfactory receptor 2AE1 (323 aa).

The Extracellular portion of the chain corresponds to 1-25 (MWQKNQTSLADFILEGLFDDSLTHL). Residue asparagine 5 is glycosylated (N-linked (GlcNAc...) asparagine). The chain crosses the membrane as a helical span at residues 26–49 (FLFSLTMVVFLIAVSGNTLTILLI). Residues 50 to 57 (CIDPQLHT) are Cytoplasmic-facing. A helical transmembrane segment spans residues 58 to 79 (PMYFLLSQLSLMDLMHVSTIIL). Topologically, residues 80–100 (KMATNYLSGKKSISFVGCATQ) are extracellular. Cysteine 97 and cysteine 189 are joined by a disulfide. A helical membrane pass occupies residues 101 to 120 (HFLYLCLGGAECFLLAVMSY). At 121-139 (DRYVAICHPLRYAVLMNKK) the chain is on the cytoplasmic side. The helical transmembrane segment at 140–158 (VGLMMAVMSWLGASVNSLI) threads the bilayer. Over 159–195 (HMAILMHFPFCGPRKVYHFYCEFPAVVKLVCGDITVY) the chain is Extracellular. Residues 196 to 218 (ETTVYISSILLLLPIFLISTSYV) form a helical membrane-spanning segment. Residues 219 to 235 (FILQSVIQMRSSGSKRN) lie on the Cytoplasmic side of the membrane. Residues 236-258 (AFATCGSHLTVVSLWFGACIFSY) form a helical membrane-spanning segment. The Extracellular portion of the chain corresponds to 259-271 (MRPRSQCTLLQNK). A helical transmembrane segment spans residues 272–291 (VGSVFYSIITPTLNSLIYTL). Residues 292–323 (RNKDVAKALRRVLRRDVITQCIQRLQLWLPRV) are Cytoplasmic-facing.

This sequence belongs to the G-protein coupled receptor 1 family.

The protein localises to the cell membrane. Its function is as follows. Odorant receptor. This is Olfactory receptor 2AE1 (OR2AE1) from Homo sapiens (Human).